Here is a 253-residue protein sequence, read N- to C-terminus: 5'-nucleotidase SurE (253 aa).

4 residues coordinate a divalent metal cation: D8, D9, S39, and N92.

This sequence belongs to the SurE nucleotidase family. A divalent metal cation is required as a cofactor.

The protein localises to the cytoplasm. It catalyses the reaction a ribonucleoside 5'-phosphate + H2O = a ribonucleoside + phosphate. Functionally, nucleotidase that shows phosphatase activity on nucleoside 5'-monophosphates. This is 5'-nucleotidase SurE from Burkholderia vietnamiensis (strain G4 / LMG 22486) (Burkholderia cepacia (strain R1808)).